Here is a 377-residue protein sequence, read N- to C-terminus: Anhydro-N-acetylmuramic acid kinase (377 aa).

Residue 18–25 (GTSADGID) participates in ATP binding.

It belongs to the anhydro-N-acetylmuramic acid kinase family.

It catalyses the reaction 1,6-anhydro-N-acetyl-beta-muramate + ATP + H2O = N-acetyl-D-muramate 6-phosphate + ADP + H(+). Its pathway is amino-sugar metabolism; 1,6-anhydro-N-acetylmuramate degradation. The protein operates within cell wall biogenesis; peptidoglycan recycling. Its function is as follows. Catalyzes the specific phosphorylation of 1,6-anhydro-N-acetylmuramic acid (anhMurNAc) with the simultaneous cleavage of the 1,6-anhydro ring, generating MurNAc-6-P. Is required for the utilization of anhMurNAc either imported from the medium or derived from its own cell wall murein, and thus plays a role in cell wall recycling. In Xanthomonas campestris pv. campestris (strain 8004), this protein is Anhydro-N-acetylmuramic acid kinase.